We begin with the raw amino-acid sequence, 95 residues long: YcgL domain-containing protein APJL_0712 (95 aa).

The 85-residue stretch at 4-88 (HLCAIYKSPK…PPENLLKTFL (85 aa)) folds into the YcgL domain.

This Actinobacillus pleuropneumoniae serotype 3 (strain JL03) protein is YcgL domain-containing protein APJL_0712.